The sequence spans 289 residues: Probable endonuclease 4 (289 aa).

9 residues coordinate Zn(2+): H74, H115, E150, D184, H187, H218, D231, H233, and E263.

This sequence belongs to the AP endonuclease 2 family. It depends on Zn(2+) as a cofactor.

The catalysed reaction is Endonucleolytic cleavage to 5'-phosphooligonucleotide end-products.. Its function is as follows. Endonuclease IV plays a role in DNA repair. It cleaves phosphodiester bonds at apurinic or apyrimidinic (AP) sites, generating a 3'-hydroxyl group and a 5'-terminal sugar phosphate. This is Probable endonuclease 4 from Mycoplasma mycoides subsp. mycoides SC (strain CCUG 32753 / NCTC 10114 / PG1).